The chain runs to 307 residues: Phosphate import ATP-binding protein PstB (307 aa).

The interval 1–30 (MSETTYTTTEDTDDTNSTDSMVGTTTGETD) is disordered. Positions 48-302 (LGVDDLDVYY…PQSERVEDYI (255 aa)) constitute an ABC transporter domain. 80-87 (GPSGCGKS) is an ATP binding site.

This sequence belongs to the ABC transporter superfamily. Phosphate importer (TC 3.A.1.7) family. In terms of assembly, the complex is composed of two ATP-binding proteins (PstB), two transmembrane proteins (PstC and PstA) and a solute-binding protein (PstS).

It localises to the cell membrane. The enzyme catalyses phosphate(out) + ATP + H2O = ADP + 2 phosphate(in) + H(+). Part of the ABC transporter complex PstSACB involved in phosphate import. Responsible for energy coupling to the transport system. The chain is Phosphate import ATP-binding protein PstB from Haloquadratum walsbyi (strain DSM 16790 / HBSQ001).